A 346-amino-acid chain; its full sequence is MENVRLTQYSHGAGCGCKISPQVLDTILRTQLAPFSDPNLLVGNESKDDAAVYDLGNGTAAISTTDFFMPIVDDPFDFGRIAATNAISDIYAMGGKPIMAIAILGWPVNVLAPEIAQQVIEGGRSVCREAGISLAGGHSIDAPEPIFGLAVTGIVDTDRVKRNNRAENGCKLYLTKPLGIGVLTTAEKQSKLADEHKGLARDWMCKLNIPGQDFANVEGVKAMTDVTGFGLMGHLSEICEGSQLKARVDFDSVPYLPGVFDYIAQGCVPGGTTRNFDSYGQKLGAMTEQQKALLCDPQTSGGLLIAVTPDAETEQQLQAIAARHNIELQAIGEMMPLDGDTLIEIC.

Cysteine 15 is an active-site residue. Residues lysine 18 and 46-48 contribute to the ATP site; that span reads SKD. Aspartate 49 contributes to the Mg(2+) binding site. Residues aspartate 66, aspartate 89, and 137–139 each bind ATP; that span reads GHS. Aspartate 89 serves as a coordination point for Mg(2+). Residue aspartate 225 participates in Mg(2+) binding.

The protein belongs to the selenophosphate synthase 1 family. Class I subfamily. Homodimer. Requires Mg(2+) as cofactor.

The enzyme catalyses hydrogenselenide + ATP + H2O = selenophosphate + AMP + phosphate + 2 H(+). In terms of biological role, synthesizes selenophosphate from selenide and ATP. The protein is Selenide, water dikinase of Photobacterium profundum (strain SS9).